The following is a 467-amino-acid chain: MVDMESPLCPLSPLEAEDLESPLSEYFLQEMGTIQDISRSLGEDSSGSFGFPEYQYLGSGPGSDGSVITDTLSPASSPSSVSYPEVPCGVDEPPSSALNIECRICGDKASGYHYGVHACEGCKGFFRRTIRLKLVYDKCDRSCKIQKKNRNKCQYCRFHKCLSVGMSHNAIRFGRMPRSEKAKLKAEVLTCDRDSEGAETADLKSLAKRIYEAYLKNFHMNKVKARIILAGKTSSHPLFVIHDMETLCTAEKTLMAKVVSDGIRDKEAEVRIFHCCQCVSVETVTNLTEFAKAIPGFASLDLNDQVTLLKYGVYEAIFTMLSSTMNKDGMLVAYGHGFITREFLKNLRKPFCDMMEPKFNFAMKFNALELDDSDISLFVAAIICCGDRPGLLNIDHIEKMQEAIVHVLKLHLQSNHPDDTFLFPKLLQKLADLRQLVTEHAQLVQVIKTESDAALHPLLQEIYRDMY.

The segment at residues 99–173 (NIECRICGDK…VGMSHNAIRF (75 aa)) is a DNA-binding region (nuclear receptor). NR C4-type zinc fingers lie at residues 102-122 (CRIC…CEGC) and 139-161 (CDRS…FHKC). The NR LBD domain occupies 239-466 (FVIHDMETLC…PLLQEIYRDM (228 aa)). The tract at residues 304–433 (DQVTLLKYGV…PKLLQKLADL (130 aa)) is required for heterodimerization with RXRA.

The protein belongs to the nuclear hormone receptor family. NR1 subfamily. As to quaternary structure, heterodimer; with RXRA. This heterodimerization is required for DNA binding and transactivation activity. Interacts with NCOA3 coactivator. Interacts with CITED2; the interaction stimulates its transcriptional activity. Also interacts with PPARBP in vitro. Interacts with AKAP13, LPIN1, PRDM16 and coactivator NCOA6. Interacts with ASXL1 and ASXL2. Interacts with PER2. Interacts with SIRT1; the interaction seems to be modulated by NAD(+) levels. Interacts with CRY1 and CRY2. In hepatocytes, interacts with PAQR3 and HUWE1; the interactions promote PPARA poylubiquitination and HUWE1-mediated degradation. Ubiquitinated by E3 ubiquitin-protein ligase HUWE1; leading to proteasomal degradation. In terms of processing, phosphorylated.

It is found in the nucleus. In terms of biological role, ligand-activated transcription factor. Key regulator of lipid metabolism. Activated by the endogenous ligand 1-palmitoyl-2-oleoyl-sn-glycerol-3-phosphocholine (16:0/18:1-GPC). Activated by oleylethanolamide, a naturally occurring lipid that regulates satiety. Receptor for peroxisome proliferators such as hypolipidemic drugs and fatty acids. Regulates the peroxisomal beta-oxidation pathway of fatty acids. Functions as a transcription activator for the ACOX1 and P450 genes. Transactivation activity requires heterodimerization with RXRA and is antagonized by NR2C2. May be required for the propagation of clock information to metabolic pathways regulated by PER2. This Cavia porcellus (Guinea pig) protein is Peroxisome proliferator-activated receptor alpha (PPARA).